A 590-amino-acid polypeptide reads, in one-letter code: Multidrug resistance-like ATP-binding protein MdlA (590 aa).

The region spanning 18–303 is the ABC transmembrane type-1 domain; sequence YLGAVALLVI…LAWMFNIVER (286 aa). 6 helical membrane-spanning segments follow: residues 23–43, 53–73, 134–154, 155–175, 248–268, and 280–300; these read ALLVIIAMLQLVPPKVVGIVV, TGQILMWIATMVLIAVVVYLL, GVLTLVDSLVMGCAVLIMMST, QISWQLTLFSLLPMPVMAIMI, IYIAIGMANLLAIGGGSWMVV, and FMMYLGLMIWPMLALAWMFNI. The region spanning 337–570 is the ABC transporter domain; it reads VNIHQFTYPQ…SGWYRDMYRY (234 aa). 369–376 serves as a coordination point for ATP; it reads GPTGSGKS.

Belongs to the ABC transporter superfamily. Drug exporter-2 (TC 3.A.1.117) family.

The protein resides in the cell inner membrane. The catalysed reaction is ATP + H2O + xenobioticSide 1 = ADP + phosphate + xenobioticSide 2.. The polypeptide is Multidrug resistance-like ATP-binding protein MdlA (mdlA) (Escherichia coli (strain K12)).